A 227-amino-acid polypeptide reads, in one-letter code: Ubiquitin domain-containing protein 1 (227 aa).

The disordered stretch occupies residues methionine 1 to lysine 35. Positions glycine 24–lysine 35 are enriched in basic and acidic residues. In terms of domain architecture, Ubiquitin-like spans phenylalanine 149–proline 224.

Interacts with UBTD1.

Functionally, may be involved in the regulation of cellular senescence through a positive feedback loop with TP53. Is a TP53 downstream target gene that increases the stability of TP53 protein by promoting the ubiquitination and degradation of MDM2. This chain is Ubiquitin domain-containing protein 1 (UBTD1), found in Homo sapiens (Human).